A 429-amino-acid chain; its full sequence is Enolase (429 aa).

Gln162 serves as a coordination point for (2R)-2-phosphoglycerate. The Proton donor role is filled by Glu204. Asp242, Glu289, and Asp316 together coordinate Mg(2+). Positions 341, 370, 371, and 392 each coordinate (2R)-2-phosphoglycerate. Residue Lys341 is the Proton acceptor of the active site.

It belongs to the enolase family. Mg(2+) is required as a cofactor.

Its subcellular location is the cytoplasm. The protein resides in the secreted. It localises to the cell surface. The enzyme catalyses (2R)-2-phosphoglycerate = phosphoenolpyruvate + H2O. The protein operates within carbohydrate degradation; glycolysis; pyruvate from D-glyceraldehyde 3-phosphate: step 4/5. In terms of biological role, catalyzes the reversible conversion of 2-phosphoglycerate (2-PG) into phosphoenolpyruvate (PEP). It is essential for the degradation of carbohydrates via glycolysis. In Flavobacterium psychrophilum (strain ATCC 49511 / DSM 21280 / CIP 103535 / JIP02/86), this protein is Enolase.